A 453-amino-acid polypeptide reads, in one-letter code: UDP-glycosyltransferase 74E2 (453 aa).

The active-site Proton acceptor is H17. H17 contacts an anthocyanidin. D109 serves as the catalytic Charge relay. The UDP-alpha-D-glucose site is built by T131, Q334, H349, W352, N353, S354, E357, D373, and Q374.

The protein belongs to the UDP-glycosyltransferase family. Expressed in roots, cotyledons and leaf hydathodes.

It catalyses the reaction (indol-3-yl)butanoate + UDP-alpha-D-glucose = 4-(indol-3-yl)butanoyl-beta-D-glucose + UDP. Glucosyltransferase that acts on the auxin indole-3-butyric acid (IBA). Mediates abiotic stress responses and stress-induced morphological adaptations by regulating auxin homeostasis. Possesses low activity in vitro on jasmonate (JA) and the synthetic auxin analog naphthaleneacetic acid (NAA). This Arabidopsis thaliana (Mouse-ear cress) protein is UDP-glycosyltransferase 74E2 (UGT74E2).